Reading from the N-terminus, the 540-residue chain is MTLNSLPVWPALQAHYEEIRDAHLRDWFAPANDRAPTRAERFTFEGGGLAADFSKNRLTDATLALLVRLAREAGVEARRDAMFAGETVNPTEGRAALHTALRANAPDAPFQAQVAAERAKMARFADAVRSGAWTGYTGKRIRHVVNIGIGGSDLGPKMVVHALHHVATPDIATHFVSNVDGADLARVLERIDPEATLAIIVSKTFTTLETMTNARSLRDWFVANGCPEGALAKHFVGVSANPAEVVKFGIAEANVFEMWDWVGGRYSLWSAVGLSIMIAIGPERFDELLAGARDMDEHFRTAPLERNLPVLQGLVGIWYRNFFGAQSYLVAPYSEALHYLPSYLQQLEMESNGKSARIDGAFVDYPTSAVTWGEPGTNGQHAFFQMLHQGPTLVPIDFIAVLTPEHPLASHHPKLLANCFAQSEALMLGRTLDEARKIVGPAKPELAPHLTFPGNRPTTTLLVDALTPRTLGALIALYEHKVLVQAAVWNINPFDQWGVELGKILGKVVEADLTAAQVDPAKHDSSTSALIARARKALGE.

Glutamate 350 functions as the Proton donor in the catalytic mechanism. Catalysis depends on residues histidine 381 and lysine 503.

It belongs to the GPI family.

It localises to the cytoplasm. The enzyme catalyses alpha-D-glucose 6-phosphate = beta-D-fructose 6-phosphate. It functions in the pathway carbohydrate biosynthesis; gluconeogenesis. Its pathway is carbohydrate degradation; glycolysis; D-glyceraldehyde 3-phosphate and glycerone phosphate from D-glucose: step 2/4. Its function is as follows. Catalyzes the reversible isomerization of glucose-6-phosphate to fructose-6-phosphate. This Burkholderia pseudomallei (strain 1710b) protein is Glucose-6-phosphate isomerase.